Here is a 325-residue protein sequence, read N- to C-terminus: MSKINLSTMWSSFIKKIAKTILVAIACISLFLTSSPAANAYPFWAQETAPATPREATGRIVCANCHLGAKLTEVEVPQSVLPDTVFKAVVKIPYDTDVQQVLGDGSKGGLNVGAVLMLPEGFKIAPEDRIPQEWQEELADLYFMPYSEEQENVLLFGPMPGDEYQEVVFPILSPDPATDKSIHFGKYAVHAGGNRGRGQVYPAGNKSNNTTYNVSASGKITDITFEEYVGNQITIETPDSETVVDLVPPGPELLVAVGDTVEAGQVITNNPNVGGFGQADTEIVLQDANRVKWLMAFFALVMLAQIMLVLKKKQVEKVQAAEMNF.

Residues methionine 1 to alanine 40 form the signal peptide. Residues tyrosine 41, cysteine 62, cysteine 65, and histidine 66 each coordinate heme. A helical transmembrane segment spans residues valine 291 to lysine 311.

It belongs to the cytochrome f family. As to quaternary structure, the 4 large subunits of the cytochrome b6-f complex are cytochrome b6, subunit IV (17 kDa polypeptide, PetD), cytochrome f and the Rieske protein, while the 4 small subunits are PetG, PetL, PetM and PetN. The complex functions as a dimer. Requires heme as cofactor.

The protein resides in the cellular thylakoid membrane. Its function is as follows. Component of the cytochrome b6-f complex, which mediates electron transfer between photosystem II (PSII) and photosystem I (PSI), cyclic electron flow around PSI, and state transitions. This Trichodesmium erythraeum (strain IMS101) protein is Cytochrome f.